Here is a 374-residue protein sequence, read N- to C-terminus: 5-hydroxytryptamine receptor 1D (374 aa).

Asn-5, Asn-17, and Asn-21 each carry an N-linked (GlcNAc...) asparagine glycan. A run of 3 helical transmembrane segments spans residues 36–61, 73–94, and 107–131; these read ISLVVVLSIITLATVLSNAFVLTTIL, LIGSLATTDLLVSILVMPISIA, and LCDIWVSSDITCCTASILHLCVIAL. Cys-108 and Cys-185 are disulfide-bonded. Residues Asp-115 and Cys-119 each contribute to the serotonin site. The short motif at 132 to 134 is the DRY motif; important for ligand-induced conformation changes element; it reads DRY. 4 helical membrane passes run 152–173, 192–215, 298–323, and 333–356; these read AAAMIAAVWAISICISIPPLFW, ISYTIYSTCGAFYIPSILLIILYG, KTLGIILGAFIICWLPFFVVSLVLPI, and ALFDFFTWLGYLNSLINPVIYTVF. Residue Ser-318 coordinates serotonin. Positions 349–353 match the NPxxY motif; important for ligand-induced conformation changes and signaling motif; that stretch reads NPVIY.

Belongs to the G-protein coupled receptor 1 family. As to quaternary structure, homodimer. Heterodimer with HTR1B. Detected in dorsal raphe.

The protein localises to the cell membrane. Functionally, G-protein coupled receptor for 5-hydroxytryptamine (serotonin). Also functions as a receptor for ergot alkaloid derivatives, various anxiolytic and antidepressant drugs and other psychoactive substances. Ligand binding causes a conformation change that triggers signaling via guanine nucleotide-binding proteins (G proteins) and modulates the activity of downstream effectors, such as adenylate cyclase. HTR1D is coupled to G(i)/G(o) G alpha proteins and mediates inhibitory neurotransmission by inhibiting adenylate cyclase activity. Regulates the release of 5-hydroxytryptamine in the brain, and thereby affects neural activity. May also play a role in regulating the release of other neurotransmitters. May play a role in vasoconstriction. The polypeptide is 5-hydroxytryptamine receptor 1D (Htr1d) (Rattus norvegicus (Rat)).